Reading from the N-terminus, the 284-residue chain is Diaminopimelate epimerase (284 aa).

Substrate is bound by residues Asn20, Gln53, and Asn73. The active-site Proton donor is the Cys82. Residues 83 to 84, Asn167, Asn200, and 218 to 219 contribute to the substrate site; these read GN and ER. Cys227 acts as the Proton acceptor in catalysis. 228 to 229 serves as a coordination point for substrate; sequence GS.

This sequence belongs to the diaminopimelate epimerase family. As to quaternary structure, homodimer.

The protein localises to the cytoplasm. The enzyme catalyses (2S,6S)-2,6-diaminopimelate = meso-2,6-diaminopimelate. The protein operates within amino-acid biosynthesis; L-lysine biosynthesis via DAP pathway; DL-2,6-diaminopimelate from LL-2,6-diaminopimelate: step 1/1. In terms of biological role, catalyzes the stereoinversion of LL-2,6-diaminopimelate (L,L-DAP) to meso-diaminopimelate (meso-DAP), a precursor of L-lysine and an essential component of the bacterial peptidoglycan. The chain is Diaminopimelate epimerase from Xylella fastidiosa (strain M23).